The following is a 418-amino-acid chain: Pyruvate decarboxylase 1 (418 aa).

His59 serves as a coordination point for substrate. A thiamine pyrophosphate binding region spans residues 337–418 (DSWFNCQKLK…IFLINNGGYT (82 aa)). 3 residues coordinate Mg(2+): Asp387, Asn414, and Gly416.

The protein belongs to the TPP enzyme family. In terms of assembly, homotetramer. It depends on a metal cation as a cofactor. Requires thiamine diphosphate as cofactor. As to expression, leaves.

It carries out the reaction a 2-oxocarboxylate + H(+) = an aldehyde + CO2. The protein is Pyruvate decarboxylase 1 (PDC1) of Nicotiana tabacum (Common tobacco).